The sequence spans 860 residues: Rod cGMP-specific 3',5'-cyclic phosphodiesterase subunit alpha (860 aa).

N-acetylglycine is present on glycine 2. 2 GAF domains span residues 73-222 and 254-431; these read QTEK…NLIM and DIER…GWSV. The 334-residue stretch at 483 to 816 folds into the PDEase domain; that stretch reads EEEELAEILQ…KEWKALADEY (334 aa). Histidine 559 acts as the Proton donor in catalysis. Histidine 563, histidine 599, aspartate 600, and aspartate 720 together coordinate a divalent metal cation. Positions 821 to 860 are disordered; the sequence is KVQEEKKQKQQSAKSAAAGNQPGGNPSPGGATTSKSCCIQ. Positions 830 to 851 are enriched in low complexity; that stretch reads QQSAKSAAAGNQPGGNPSPGGA. Cysteine 857 is modified (cysteine methyl ester). The S-farnesyl cysteine moiety is linked to residue cysteine 857. A propeptide spans 858–860 (removed in mature form); sequence CIQ.

The protein belongs to the cyclic nucleotide phosphodiesterase family. As to quaternary structure, oligomer composed of two catalytic chains (alpha and beta), an inhibitory chain (gamma) and the delta chain. It depends on a divalent metal cation as a cofactor.

It localises to the cell membrane. The protein resides in the cell projection. The protein localises to the cilium. Its subcellular location is the photoreceptor outer segment. It carries out the reaction 3',5'-cyclic GMP + H2O = GMP + H(+). Its function is as follows. Rod-specific cGMP phosphodiesterase that catalyzes the hydrolysis of 3',5'-cyclic GMP. This protein participates in processes of transmission and amplification of the visual signal. The polypeptide is Rod cGMP-specific 3',5'-cyclic phosphodiesterase subunit alpha (Homo sapiens (Human)).